The chain runs to 161 residues: Nucleotide-binding protein Shew185_3601 (161 aa).

The protein belongs to the YajQ family.

Functionally, nucleotide-binding protein. This chain is Nucleotide-binding protein Shew185_3601, found in Shewanella baltica (strain OS185).